A 1888-amino-acid chain; its full sequence is Tensin-1 (1888 aa).

Pro residues predominate over residues 21–31; sequence PQPPGTPPGPA. Positions 21–45 are disordered; the sequence is PQPPGTPPGPARPERCEPGGAAPDP. The segment at 61-108 adopts a Phorbol-ester/DAG-type zinc-finger fold; the sequence is THHFKVKAFKKVKPCGICRQAITREGCVCKVCSFSCHRKCQAKVAAPC. The segment at 132–174 is disordered; sequence GEGDCRVGSSPKNLEEGGSMRVSPSIQPQPQSQPTSLSRNTSV. Low complexity predominate over residues 154–167; sequence SPSIQPQPQSQPTS. The 173-residue stretch at 175–347 folds into the Phosphatase tensin-type domain; it reads SRAMEDSCEL…HYFSGLLSGS (173 aa). In terms of domain architecture, C2 tensin-type spans 352–478; the sequence is NKPLFLHHVI…GKVEFVFSYG (127 aa). Phosphoserine occurs at positions 509 and 535. The residue at position 537 (Tyr-537) is a Phosphotyrosine. Disordered regions lie at residues 543–608, 696–722, and 789–854; these read KDSL…PQEK, VTNTSESGYPETLSPLTNGLDKPYSTE, and RSQS…SAET. Ser-549 carries the post-translational modification Phosphoserine. Polar residues predominate over residues 571 to 584; that stretch reads LSVSSDSGNSTAST. Ser-604 is subject to Phosphoserine. Residue Ser-792 is modified to Phosphoserine. Residues 835 to 852 show a composition bias toward polar residues; it reads RSPLQSLARSKPSPQLSA. Position 867 is a phosphoserine (Ser-867). Disordered stretches follow at residues 893–1077 and 1109–1555; these read PLHK…RSPV and EEME…AGSL. Residues 905–922 show a composition bias toward low complexity; the sequence is PGASPLSSQPLLGSSRQS. Phosphoserine is present on residues Ser-930, Ser-935, and Ser-952. A compositionally biased stretch (polar residues) spans 962 to 986; the sequence is GSNQSFHPKSPASSTFLPSPHSSAG. Phosphothreonine is present on Thr-1015. Ser-1054 bears the Phosphoserine mark. Residues 1057-1069 are compositionally biased toward polar residues; it reads QYENQSPEATSPR. Phosphotyrosine is present on Tyr-1058. A phosphoserine mark is found at Ser-1062, Ser-1118, and Ser-1122. A compositionally biased stretch (basic and acidic residues) spans 1169–1179; the sequence is EVTKPPEEPRS. Residues 1227–1239 show a composition bias toward low complexity; that stretch reads SPSPLSTSSPILS. The segment covering 1240 to 1257 has biased composition (polar residues); the sequence is ADSTSVGSFPSVVSSDQG. Ser-1279 is modified (phosphoserine). A compositionally biased stretch (low complexity) spans 1284–1300; that stretch reads SYQSSSPVPVGGSSYNS. The segment covering 1301 to 1322 has biased composition (polar residues); the sequence is PDYSLQPFSSSPESQGQPQYSA. An O-linked (GalNAc...) serine glycan is attached at Ser-1321. Position 1331 is a phosphoserine (Ser-1331). Thr-1343 is modified (phosphothreonine). At Ser-1346 the chain carries Phosphoserine. Thr-1420 bears the Phosphothreonine mark. A Phosphoserine modification is found at Ser-1423. A compositionally biased stretch (polar residues) spans 1436–1446; sequence NLASSLHSNAV. A phosphoserine mark is found at Ser-1448, Ser-1463, and Ser-1468. Polar residues predominate over residues 1490–1507; it reads LSRQSSASGYQAPSTPSF. Over residues 1518–1530 the composition is skewed to low complexity; that stretch reads SSPATSPSPDSAA. Residues Ser-1535, Ser-1547, Ser-1554, and Ser-1599 each carry the phosphoserine modification. In terms of domain architecture, SH2 spans 1616-1725; sequence WYKPEISREQ…ALPCKLVIPS (110 aa). Ser-1741 is subject to Phosphoserine. The 135-residue stretch at 1751–1885 folds into the PTB domain; sequence ACNVLFVNSV…FVSKVMLSAG (135 aa).

Belongs to the PTEN phosphatase protein family. As to quaternary structure, binds to actin filaments and interacts with phosphotyrosine-containing proteins. Interacts with STARD8. Interacts with protein phosphatase PPP1CA. Interacts (via N-terminus) with Rho GTPase-activating protein DLC1; the interaction is decreased by phosphorylation of TNS1. Interacts with tyrosine-phosphorylated proteins BCAR1/p130Cas and PTK2/FAK; the interactions are increased by phosphorylation of TNS1. Extensively phosphorylated on serine and threonine residues in a p38 MAPK-dependent manner which reduces interaction with DLC1 and increases interaction with tyrosine-phosphorylated proteins including BCAR1/p130cas and PTK2/FAK. The majority of the phosphorylated Ser/Thr residues are immediately adjacent to a proline residue. Also phosphorylated on tyrosine residues. Post-translationally, rapidly cleaved by calpain II.

It is found in the cell surface. It localises to the cell junction. Its subcellular location is the focal adhesion. The protein localises to the cytoplasm. The protein resides in the cytoskeleton. In terms of biological role, may act as a protein phosphatase and/or a lipid phosphatase. Involved in fibrillar adhesion formation. Essential for myofibroblast differentiation and myofibroblast-mediated extracellular matrix deposition. Enhances RHOA activation in the presence of DLC1. Plays a role in cell polarization and migration. May be involved in cartilage development and in linking signal transduction pathways to the cytoskeleton. In Mus musculus (Mouse), this protein is Tensin-1.